Here is a 510-residue protein sequence, read N- to C-terminus: NAD(P)H-quinone oxidoreductase subunit 2 A, chloroplastic (510 aa).

13 helical membrane passes run 31–51 (FIFPECILIFGLILLLMIDLT), 57–77 (TPWLYFISSTSLVMSITALLF), 99–119 (IFQFLILLCSTLCIPLSVEYI), 124–144 (MAITEFLLFVLTATLGGMFLC), 149–169 (LITIFVAPECFSLCSYLLSGY), 183–203 (YLLMGGASSSILVYGFSWLYG), 229–249 (ISIALISITVGIGFKLSPAPF), 295–315 (WHLLLEILAILSMILGNLIAI), 323–343 (MLAYSSIGQIGYVIIGIIVGD), 354–374 (YMLFYIAMNLGTFACIVLFGL), 395–415 (ALSSALCLLSLGGIPPLAGFF), 418–438 (LYLFWCGWQAGLYFLVSIGLL), and 484–504 (MIVCVIASTIPGISMNPIIAI).

Belongs to the complex I subunit 2 family. As to quaternary structure, NDH is composed of at least 16 different subunits, 5 of which are encoded in the nucleus.

The protein resides in the plastid. It localises to the chloroplast thylakoid membrane. It catalyses the reaction a plastoquinone + NADH + (n+1) H(+)(in) = a plastoquinol + NAD(+) + n H(+)(out). The catalysed reaction is a plastoquinone + NADPH + (n+1) H(+)(in) = a plastoquinol + NADP(+) + n H(+)(out). In terms of biological role, NDH shuttles electrons from NAD(P)H:plastoquinone, via FMN and iron-sulfur (Fe-S) centers, to quinones in the photosynthetic chain and possibly in a chloroplast respiratory chain. The immediate electron acceptor for the enzyme in this species is believed to be plastoquinone. Couples the redox reaction to proton translocation, and thus conserves the redox energy in a proton gradient. This Nymphaea alba (White water-lily) protein is NAD(P)H-quinone oxidoreductase subunit 2 A, chloroplastic.